Consider the following 346-residue polypeptide: L-threonine dehydratase catabolic TdcB (346 aa).

F59–T60 provides a ligand contact to AMP. At K64 the chain carries N6-(pyridoxal phosphate)lysine. Residues Q94, G125–Y126, and N321 each bind AMP.

This sequence belongs to the serine/threonine dehydratase family. In the native structure, TdcB is in a dimeric form, whereas in the TdcB-AMP complex, it exists in a tetrameric form (dimer of dimers). Pyridoxal 5'-phosphate is required as a cofactor.

It carries out the reaction L-threonine = 2-oxobutanoate + NH4(+). It functions in the pathway amino-acid degradation; L-threonine degradation via propanoate pathway; propanoate from L-threonine: step 1/4. Each protein molecule can bind up to four molecules of AMP, which act as an allosteric activator to the enzyme. Its function is as follows. Catalyzes the anaerobic formation of alpha-ketobutyrate and ammonia from threonine in a two-step reaction. The first step involved a dehydration of threonine and a production of enamine intermediates (aminocrotonate), which tautomerizes to its imine form (iminobutyrate). Both intermediates are unstable and short-lived. The second step is the nonenzymatic hydrolysis of the enamine/imine intermediates to form 2-ketobutyrate and free ammonia. In the low water environment of the cell, the second step is accelerated by RidA. This is L-threonine dehydratase catabolic TdcB (tdcB) from Staphylococcus aureus (strain Mu50 / ATCC 700699).